Here is a 78-residue protein sequence, read N- to C-terminus: Exodeoxyribonuclease 7 small subunit (78 aa).

The protein belongs to the XseB family. Heterooligomer composed of large and small subunits.

It is found in the cytoplasm. It carries out the reaction Exonucleolytic cleavage in either 5'- to 3'- or 3'- to 5'-direction to yield nucleoside 5'-phosphates.. Its function is as follows. Bidirectionally degrades single-stranded DNA into large acid-insoluble oligonucleotides, which are then degraded further into small acid-soluble oligonucleotides. The sequence is that of Exodeoxyribonuclease 7 small subunit from Synechococcus sp. (strain JA-3-3Ab) (Cyanobacteria bacterium Yellowstone A-Prime).